A 319-amino-acid chain; its full sequence is Type II secretion system protein C 2 (319 aa).

The Cytoplasmic segment spans residues 1 to 42 (MARVVFRDARIYLIQWLTKIRHTLNQRQSLNTDKEHLRKIVR). The helical transmembrane segment at 43-65 (GMFWLMLLIISAKVAHSLWRYFS) threads the bilayer. At 66–319 (FSAEYTAVSP…ARHDISIALR (254 aa)) the chain is on the periplasmic side.

The protein belongs to the GSP C family. In terms of assembly, interacts with outer cell membrane protein GspD2 in the periplasm.

It localises to the cell inner membrane. Its function is as follows. Involved in a type II secretion system (T2SS, formerly general secretion pathway, GSP) for the export of folded proteins across the outer membrane. The sequence is that of Type II secretion system protein C 2 (gspC2) from Escherichia coli O78:H11 (strain H10407 / ETEC).